Reading from the N-terminus, the 646-residue chain is DEAD-box ATP-dependent RNA helicase 52 (646 aa).

2 disordered regions span residues M1–G64 and G76–N117. S2 is modified (N-acetylserine). Composition is skewed to gly residues over residues D54 to G64 and G76 to G87. The Q motif motif lies at N146–R174. The 185-residue stretch at I177–L361 folds into the Helicase ATP-binding domain. A190–T197 serves as a coordination point for ATP. The short motif at D305–D308 is the DEAD box element. The Helicase C-terminal domain occupies H388–A539.

Belongs to the DEAD box helicase family. DDX3/DED1 subfamily.

It catalyses the reaction ATP + H2O = ADP + phosphate + H(+). In Arabidopsis thaliana (Mouse-ear cress), this protein is DEAD-box ATP-dependent RNA helicase 52 (RH52).